Here is a 933-residue protein sequence, read N- to C-terminus: Isoleucine--tRNA ligase (933 aa).

Residues 57–67 (PYANGNIHVGH) carry the 'HIGH' region motif. Glutamate 554 is a binding site for L-isoleucyl-5'-AMP. A 'KMSKS' region motif is present at residues 595–599 (KMSKS). Lysine 598 contacts ATP.

It belongs to the class-I aminoacyl-tRNA synthetase family. IleS type 1 subfamily. Monomer.

The protein localises to the cytoplasm. The enzyme catalyses tRNA(Ile) + L-isoleucine + ATP = L-isoleucyl-tRNA(Ile) + AMP + diphosphate. In terms of biological role, catalyzes the attachment of isoleucine to tRNA(Ile). As IleRS can inadvertently accommodate and process structurally similar amino acids such as valine, to avoid such errors it has two additional distinct tRNA(Ile)-dependent editing activities. One activity is designated as 'pretransfer' editing and involves the hydrolysis of activated Val-AMP. The other activity is designated 'posttransfer' editing and involves deacylation of mischarged Val-tRNA(Ile). The sequence is that of Isoleucine--tRNA ligase from Streptococcus pyogenes serotype M28 (strain MGAS6180).